We begin with the raw amino-acid sequence, 431 residues long: 23S rRNA (uracil(1939)-C(5))-methyltransferase RlmD (431 aa).

The 59-residue stretch at 10–68 (RVTTRQIITVKVNDLDSFGQGVARHNGKALFIPGLLPEESAEVIITEDKKQFARARVSR) folds into the TRAM domain. The [4Fe-4S] cluster site is built by Cys81, Cys87, Cys90, and Cys161. Residues Gln264, Phe293, Asn298, Glu314, Asn341, and Asp362 each contribute to the S-adenosyl-L-methionine site. The active-site Nucleophile is Cys388.

Belongs to the class I-like SAM-binding methyltransferase superfamily. RNA M5U methyltransferase family. RlmD subfamily.

The enzyme catalyses uridine(1939) in 23S rRNA + S-adenosyl-L-methionine = 5-methyluridine(1939) in 23S rRNA + S-adenosyl-L-homocysteine + H(+). Functionally, catalyzes the formation of 5-methyl-uridine at position 1939 (m5U1939) in 23S rRNA. The polypeptide is 23S rRNA (uracil(1939)-C(5))-methyltransferase RlmD (Salmonella paratyphi A (strain ATCC 9150 / SARB42)).